We begin with the raw amino-acid sequence, 288 residues long: ATP synthase gamma chain (288 aa).

Belongs to the ATPase gamma chain family. In terms of assembly, F-type ATPases have 2 components, CF(1) - the catalytic core - and CF(0) - the membrane proton channel. CF(1) has five subunits: alpha(3), beta(3), gamma(1), delta(1), epsilon(1). CF(0) has three main subunits: a, b and c.

Its subcellular location is the cell membrane. In terms of biological role, produces ATP from ADP in the presence of a proton gradient across the membrane. The gamma chain is believed to be important in regulating ATPase activity and the flow of protons through the CF(0) complex. In Staphylococcus saprophyticus subsp. saprophyticus (strain ATCC 15305 / DSM 20229 / NCIMB 8711 / NCTC 7292 / S-41), this protein is ATP synthase gamma chain.